Consider the following 211-residue polypeptide: Redox-sensing transcriptional repressor Rex (211 aa).

Residues 16-55 (LYYRYLLILNEEGKDKVSSTELSEAVQVDSASIRRDFSYF) constitute a DNA-binding region (H-T-H motif). 90-95 (GVGNLG) is a binding site for NAD(+).

This sequence belongs to the transcriptional regulatory Rex family. Homodimer.

Its subcellular location is the cytoplasm. Functionally, modulates transcription in response to changes in cellular NADH/NAD(+) redox state. This chain is Redox-sensing transcriptional repressor Rex, found in Lactobacillus acidophilus (strain ATCC 700396 / NCK56 / N2 / NCFM).